The primary structure comprises 249 residues: Homeobox protein TGIF2LX (249 aa).

Residues 1 to 27 (MEAAADRPAETRSRVEKDSRRAKKDSP) are compositionally biased toward basic and acidic residues. 2 disordered regions span residues 1 to 60 (MEAA…KKKR) and 121 to 215 (QRRG…EPVS). Over residues 28–46 (AKTQSPAQDTSIMLRSNAD) the composition is skewed to polar residues. The segment at residues 55-118 (EHKKKRKGYL…INARRRILPD (64 aa)) is a DNA-binding region (homeobox; TALE-type). Positions 159–172 (DNVQSLPLRSSPKG) are enriched in polar residues. The segment covering 202–215 (VSNITSSSSPEPVS) has biased composition (low complexity).

This sequence belongs to the TALE/TGIF homeobox family.

The protein localises to the nucleus. Functionally, may have a transcription role in testis. The sequence is that of Homeobox protein TGIF2LX (TGIF2LX) from Miopithecus talapoin (Angolan talapoin).